The chain runs to 209 residues: Superoxide dismutase [Mn/Fe] (209 aa).

Fe(3+) contacts are provided by H38, H90, D172, and H176. H38, H90, D172, and H176 together coordinate Mn(2+).

The protein belongs to the iron/manganese superoxide dismutase family. Mn(2+) is required as a cofactor. The cofactor is Fe(3+).

The catalysed reaction is 2 superoxide + 2 H(+) = H2O2 + O2. Destroys superoxide anion radicals which are normally produced within the cells and which are toxic to biological systems. Catalyzes the dismutation of superoxide anion radicals into O2 and H2O2 by successive reduction and oxidation of the transition metal ion at the active site. This is Superoxide dismutase [Mn/Fe] (sodB) from Rickettsia conorii (strain ATCC VR-613 / Malish 7).